Here is a 612-residue protein sequence, read N- to C-terminus: uncharacterized protein (612 aa).

Positions 213–238 (ASAEDGEEAAAGAGKRQVARSGARKR) are disordered. In terms of domain architecture, VWFA spans 421 to 610 (DLACLLLADL…ERLLQLYRRL (190 aa)).

The protein resides in the cytoplasm. Its function is as follows. Component of the anaerobic respiratory chain that transforms nitrate to dinitrogen (denitrification). Function unknown, but essential for the denitrification process. This is an uncharacterized protein from Pseudomonas aeruginosa (strain ATCC 15692 / DSM 22644 / CIP 104116 / JCM 14847 / LMG 12228 / 1C / PRS 101 / PAO1).